A 129-amino-acid polypeptide reads, in one-letter code: Copper chaperone GriE (129 aa).

Positions Met-1–Ala-37 form a signal peptide, tat-type signal. The interval Glu-32–His-51 is disordered. A compositionally biased stretch (low complexity) spans Ala-34–Thr-45.

It belongs to the melC1 family. In terms of processing, predicted to be exported by the Tat system. The position of the signal peptide cleavage has not been experimentally proven.

In terms of biological role, involved in the transfer of Cu(2+) ions to the apo form of o-aminophenol oxidase GriF in the grixazone biosynthetic pathway. This is Copper chaperone GriE (griE) from Streptomyces griseus subsp. griseus (strain JCM 4626 / CBS 651.72 / NBRC 13350 / KCC S-0626 / ISP 5235).